Here is a 429-residue protein sequence, read N- to C-terminus: Malate dehydrogenase [NADP] 1, chloroplastic (429 aa).

A chloroplast-targeting transit peptide spans 1–40; the sequence is MGLSTAYSPVGSHLAPAPLGHRRSAQLHRPRRALLATVRC. An intrachain disulfide couples Cys64 to Cys69. 93–99 lines the NADP(+) pocket; it reads GAAGMIS. Substrate contacts are provided by Arg174 and Arg180. NADP(+)-binding positions include Asn187, Gln194, and 211–213; that span reads VGN. 2 residues coordinate substrate: Asn213 and Arg244. His269 (proton acceptor) is an active-site residue. A disulfide bond links Cys405 and Cys417.

It belongs to the LDH/MDH superfamily. MDH type 2 family. In terms of assembly, homodimer.

The protein localises to the plastid. It is found in the chloroplast. It catalyses the reaction (S)-malate + NADP(+) = oxaloacetate + NADPH + H(+). Chloroplast NADP-MDH is activated upon illumination. In order to be enzymatically active, disulfide bridges on the protein must be reduced by thioredoxin which receives electrons from ferredoxin and the electron transport system of photosynthesis. Functionally, the chloroplastic, NADP-dependent form is essential for the photosynthesis C4 cycle, which allows plants to circumvent the problem of photorespiration. In C4 plants, NADP-MDH activity acts to convert oxaloacetate to malate in chloroplasts of mesophyll cells for transport to the bundle sheath cells. The sequence is that of Malate dehydrogenase [NADP] 1, chloroplastic from Sorghum bicolor (Sorghum).